Reading from the N-terminus, the 142-residue chain is Alpha-lactalbumin (142 aa).

Positions 1-19 are cleaved as a signal peptide; the sequence is MMSFVSLLLVGILFHATQA. The 123-residue stretch at 20 to 142 folds into the C-type lysozyme domain; the sequence is EQLTKCEVFR…KLDQWLCEKL (123 aa). Disulfide bonds link Cys-25/Cys-139, Cys-47/Cys-130, Cys-80/Cys-96, and Cys-92/Cys-110. Asn-64 and Asn-93 each carry an N-linked (GlcNAc...) asparagine glycan. 5 residues coordinate Ca(2+): Lys-98, Asp-101, Asp-103, Asp-106, and Asp-107.

This sequence belongs to the glycosyl hydrolase 22 family. In terms of assembly, lactose synthase (LS) is a heterodimer of a catalytic component, beta1,4-galactosyltransferase (beta4Gal-T1) and a regulatory component, alpha-lactalbumin (LA). Mammary gland specific. Secreted in milk.

The protein localises to the secreted. Its function is as follows. Regulatory subunit of lactose synthase, changes the substrate specificity of galactosyltransferase in the mammary gland making glucose a good acceptor substrate for this enzyme. This enables LS to synthesize lactose, the major carbohydrate component of milk. In other tissues, galactosyltransferase transfers galactose onto the N-acetylglucosamine of the oligosaccharide chains in glycoproteins. This is Alpha-lactalbumin (LALBA) from Bos mutus grunniens (Wild yak).